A 140-amino-acid polypeptide reads, in one-letter code: Arsenate-mycothiol transferase ArsC1 (140 aa).

The protein belongs to the low molecular weight phosphotyrosine protein phosphatase family.

It is found in the cytoplasm. The catalysed reaction is mycothiol + arsenate = arseno-mycothiol + H2O. In terms of biological role, involved in defense against toxic arsenate. Involved in the mycothiol/myoredoxin redox pathway which uses a mycothioltransferase mechanism; facilitates adduct formation between arsenate and mycothiol. The sequence is that of Arsenate-mycothiol transferase ArsC1 (arsC1) from Corynebacterium glutamicum (strain ATCC 13032 / K051).